The primary structure comprises 80 residues: Clavanin-A (80 aa).

The N-terminal stretch at 1–19 (MKTTILILLILGLGINAKS) is a signal peptide. Residues 20–29 (LEERKSEEEK) constitute a propeptide that is removed on maturation. Phenylalanine amide is present on F52. The propeptide occupies 54–80 (DDQQDNGKFYGHYAEDNGKHWYDTGDQ).

The protein localises to the secreted. Its function is as follows. Has antimicrobial activity. The protein is Clavanin-A of Styela clava (Sea squirt).